The chain runs to 129 residues: Putative zinc finger protein 702 (129 aa).

C2H2-type zinc fingers lie at residues 34 to 56 (YKCD…HRCH), 62 to 84 (YKCN…KAIH), and 90 to 112 (HKCN…HRLH).

This sequence belongs to the krueppel C2H2-type zinc-finger protein family.

It is found in the nucleus. May be involved in transcriptional regulation. The polypeptide is Putative zinc finger protein 702 (ZNF702P) (Homo sapiens (Human)).